The primary structure comprises 109 residues: Class I hydrophobin SC1 (109 aa).

An N-terminal signal peptide occupies residues 1–22; it reads MRFSLAILALPVLAAATAVPRG. 4 disulfide bridges follow: cysteine 27–cysteine 88, cysteine 34–cysteine 82, cysteine 35–cysteine 69, and cysteine 89–cysteine 102.

This sequence belongs to the fungal hydrophobin family. Self-assembles to form functional amyloid fibrils called rodlets. Self-assembly into fibrillar rodlets occurs spontaneously at hydrophobic:hydrophilic interfaces and the rodlets further associate laterally to form amphipathic monolayers.

The protein resides in the secreted. Its subcellular location is the cell wall. Its function is as follows. Aerial growth, conidiation, and dispersal of filamentous fungi in the environment rely upon a capability of their secreting small amphipathic proteins called hydrophobins (HPBs) with low sequence identity. Class I can self-assemble into an outermost layer of rodlet bundles on aerial cell surfaces, conferring cellular hydrophobicity that supports fungal growth, development and dispersal; whereas Class II form highly ordered films at water-air interfaces through intermolecular interactions but contribute nothing to the rodlet structure. SC1 is a dikaryon-specific class I hydrophobin that contributes to the formation of aerial hyphae and fruiting bodies. This chain is Class I hydrophobin SC1, found in Schizophyllum commune (Split gill fungus).